We begin with the raw amino-acid sequence, 73 residues long: MPTKAGTKSTAHKKTTTKGPSKSPKGKTHATALHQGMLYKDMVNVAKSKGIPIYQNGSRLTKSELEKKIRRSK.

The tract at residues 1–35 (MPTKAGTKSTAHKKTTTKGPSKSPKGKTHATALHQ) is disordered.

Belongs to the asfivirus P10 family.

It is found in the virion. Functionally, may play a role in genome packaging through direct interaction with viral DNA. Binds to ssDNA and dsDNA with the same apparent affinity in vitro. This is Structural DNA-binding protein p10 from African swine fever virus (isolate Tick/Malawi/Lil 20-1/1983) (ASFV).